The sequence spans 1342 residues: DNA-directed RNA polymerase subunit beta (1342 aa).

The protein belongs to the RNA polymerase beta chain family. As to quaternary structure, the RNAP catalytic core consists of 2 alpha, 1 beta, 1 beta' and 1 omega subunit. When a sigma factor is associated with the core the holoenzyme is formed, which can initiate transcription.

The enzyme catalyses RNA(n) + a ribonucleoside 5'-triphosphate = RNA(n+1) + diphosphate. Its function is as follows. DNA-dependent RNA polymerase catalyzes the transcription of DNA into RNA using the four ribonucleoside triphosphates as substrates. The polypeptide is DNA-directed RNA polymerase subunit beta (Yersinia pestis bv. Antiqua (strain Angola)).